A 100-amino-acid polypeptide reads, in one-letter code: Integration host factor subunit alpha (100 aa).

It belongs to the bacterial histone-like protein family. In terms of assembly, heterodimer of an alpha and a beta chain.

This protein is one of the two subunits of integration host factor, a specific DNA-binding protein that functions in genetic recombination as well as in transcriptional and translational control. The sequence is that of Integration host factor subunit alpha from Caulobacter sp. (strain K31).